We begin with the raw amino-acid sequence, 433 residues long: Tyrosine--tRNA ligase (433 aa).

Tyr-34 is a binding site for L-tyrosine. The short motif at 39 to 48 (PTASSLHVGS) is the 'HIGH' region element. Residues Tyr-169 and Gln-173 each contribute to the L-tyrosine site. Positions 229–233 (KMGKT) match the 'KMSKS' region motif. Lys-232 contributes to the ATP binding site. The S4 RNA-binding domain occupies 364–432 (IPAFVLFHTV…RYHTIVVRKG (69 aa)).

It belongs to the class-I aminoacyl-tRNA synthetase family. TyrS type 1 subfamily. In terms of assembly, homodimer.

Its subcellular location is the cytoplasm. It catalyses the reaction tRNA(Tyr) + L-tyrosine + ATP = L-tyrosyl-tRNA(Tyr) + AMP + diphosphate + H(+). In terms of biological role, catalyzes the attachment of tyrosine to tRNA(Tyr) in a two-step reaction: tyrosine is first activated by ATP to form Tyr-AMP and then transferred to the acceptor end of tRNA(Tyr). In Desulfosudis oleivorans (strain DSM 6200 / JCM 39069 / Hxd3) (Desulfococcus oleovorans), this protein is Tyrosine--tRNA ligase.